A 291-amino-acid chain; its full sequence is Neugrin (291 aa).

The first 15 residues, 1-15 (MAVTLSLLLSGRVCA), serve as a signal peptide directing secretion. Positions 27-49 (VADPGPIGREPDPDSDWEPEERE) are disordered. The segment covering 39-49 (PDSDWEPEERE) has biased composition (acidic residues). S41 bears the Phosphoserine mark. An N-linked (GlcNAc...) asparagine glycan is attached at N158. Residues 224 to 270 (VAAPLGHPRELQKYSSDSESPRRTGNGALPSDQKLEELKAEEPGNFS) form a disordered region. Residues 256–265 (QKLEELKAEE) are compositionally biased toward basic and acidic residues.

This sequence belongs to the neugrin family. As to quaternary structure, forms a regulatory protein-RNA complex, consisting of RCC1L, NGRN, RPUSD3, RPUSD4, TRUB2, FASTKD2 and 16S mt-rRNA. Interacts with 16S mt-rRNA; this interaction is direct.

It localises to the nucleus. It is found in the secreted. The protein resides in the mitochondrion membrane. In terms of biological role, plays an essential role in mitochondrial ribosome biogenesis. As a component of a functional protein-RNA module, consisting of RCC1L, NGRN, RPUSD3, RPUSD4, TRUB2, FASTKD2 and 16S mitochondrial ribosomal RNA (16S mt-rRNA), controls 16S mt-rRNA abundance and is required for intra-mitochondrial translation of core subunits of the oxidative phosphorylation system. The chain is Neugrin (NGRN) from Pongo abelii (Sumatran orangutan).